The following is an 879-amino-acid chain: Putative ankyrin repeat protein L88 (879 aa).

ANK repeat units lie at residues 22-62 (KGFT…QKNK), 63-96 (KGYT…KTNI), 100-133 (EGIT…DINA), 137-170 (NGYT…NIDD), 174-207 (NGLT…DINA), 211-241 (NGRT…DIEA), 245-278 (KGLT…NIEA), 282-313 (KLRT…NIET), 317-347 (RNNT…NINH), 351-384 (EGCN…NINN), 387-420 (SERT…DPNI), 424-463 (NGNT…NPNF), 470-499 (NSLT…DINS), 506-542 (SALL…DVNI), 546-578 (NGNT…NPNT), 674-704 (SGIT…DPNI), and 708-738 (KGET…NPYI).

This Acanthamoeba polyphaga mimivirus (APMV) protein is Putative ankyrin repeat protein L88.